The primary structure comprises 216 residues: uncharacterized protein (216 aa).

Residues 5 to 22 form a helical membrane-spanning segment; that stretch reads LGLVFGSVILIYLISLFL.

It is found in the membrane. This is an uncharacterized protein from Aquifex aeolicus (strain VF5).